Consider the following 322-residue polypeptide: Ferredoxin--NADP reductase (322 aa).

Residues aspartate 33, glutamine 41, tyrosine 46, alanine 86, phenylalanine 120, aspartate 278, and serine 319 each contribute to the FAD site.

It belongs to the ferredoxin--NADP reductase type 2 family. As to quaternary structure, homodimer. Requires FAD as cofactor.

It catalyses the reaction 2 reduced [2Fe-2S]-[ferredoxin] + NADP(+) + H(+) = 2 oxidized [2Fe-2S]-[ferredoxin] + NADPH. The sequence is that of Ferredoxin--NADP reductase from Salinispora tropica (strain ATCC BAA-916 / DSM 44818 / JCM 13857 / NBRC 105044 / CNB-440).